Consider the following 258-residue polypeptide: Acyl-[acyl-carrier-protein]--UDP-N-acetylglucosamine O-acyltransferase (258 aa).

It belongs to the transferase hexapeptide repeat family. LpxA subfamily. As to quaternary structure, homotrimer.

The protein resides in the cytoplasm. The enzyme catalyses a (3R)-hydroxyacyl-[ACP] + UDP-N-acetyl-alpha-D-glucosamine = a UDP-3-O-[(3R)-3-hydroxyacyl]-N-acetyl-alpha-D-glucosamine + holo-[ACP]. The protein operates within glycolipid biosynthesis; lipid IV(A) biosynthesis; lipid IV(A) from (3R)-3-hydroxytetradecanoyl-[acyl-carrier-protein] and UDP-N-acetyl-alpha-D-glucosamine: step 1/6. Involved in the biosynthesis of lipid A, a phosphorylated glycolipid that anchors the lipopolysaccharide to the outer membrane of the cell. The protein is Acyl-[acyl-carrier-protein]--UDP-N-acetylglucosamine O-acyltransferase of Syntrophobacter fumaroxidans (strain DSM 10017 / MPOB).